Reading from the N-terminus, the 290-residue chain is Probable lipid hydrolase 463L (290 aa).

Helical transmembrane passes span 26-46 (TLVL…LNGL) and 53-73 (ISTF…SIGY). The PNPLA domain occupies 27–207 (LVLSGGAMRG…WNNFPIDIAI (181 aa)). The GXSXG motif lies at 58–62 (GISSG). Residue S60 is the Nucleophile of the active site. Catalysis depends on D194, which acts as the Proton acceptor. Positions 194–196 (DGG) match the DGA/G motif.

It localises to the membrane. In terms of biological role, probable lipid hydrolase. The protein is Probable lipid hydrolase 463L of Invertebrate iridescent virus 6 (IIV-6).